The primary structure comprises 213 residues: MOB kinase activator-like 1 homolog A (213 aa).

Zn(2+)-binding residues include C77, C82, H159, and H164.

This sequence belongs to the MOB1/phocein family.

This chain is MOB kinase activator-like 1 homolog A (mobA), found in Dictyostelium discoideum (Social amoeba).